The sequence spans 173 residues: Putative metal-dependent hydrolase BA_2700/GBAA_2700/BAS2515 (173 aa).

Positions 65, 156, and 160 each coordinate Zn(2+).

Belongs to the metal hydrolase YfiT family. Homodimer. Zn(2+) serves as cofactor.

The protein resides in the cytoplasm. Possible metal-dependent hydrolase. This is Putative metal-dependent hydrolase BA_2700/GBAA_2700/BAS2515 from Bacillus anthracis.